The primary structure comprises 584 residues: uncharacterized protein (584 aa).

4 disordered regions span residues 151 to 188 (EHPP…DNDL), 222 to 243 (KRKE…SRAN), 399 to 418 (SETP…PPDF), and 433 to 584 (MQPS…AKSD). Residues 159–188 (TSSEKTRSENRERKKRWREQNEERNKDNDL) are compositionally biased toward basic and acidic residues. Residues 231–243 (LSQNQSSNASRAN) show a composition bias toward low complexity. Composition is skewed to polar residues over residues 399–409 (SETPTPVSGNG), 433–453 (MQPS…SSEM), 483–500 (NAVT…SGSP), 511–531 (NYSQ…SSLP), and 572–584 (QRSS…AKSD).

This is an uncharacterized protein from Schizosaccharomyces pombe (strain 972 / ATCC 24843) (Fission yeast).